We begin with the raw amino-acid sequence, 208 residues long: 7-carboxy-7-deazaguanine synthase (208 aa).

Residues 23 to 25 and Arg-38 each bind substrate; that span reads LQG. The Radical SAM core domain occupies 29–208; sequence WAGGNAFFIR…LQTHKYLGVR (180 aa). Positions 42, 46, and 49 each coordinate [4Fe-4S] cluster. Thr-83 serves as a coordination point for substrate. S-adenosyl-L-methionine is bound by residues Gly-85 and 126–128; that span reads SPK.

The protein belongs to the radical SAM superfamily. 7-carboxy-7-deazaguanine synthase family. In terms of assembly, homodimer. It depends on [4Fe-4S] cluster as a cofactor. S-adenosyl-L-methionine is required as a cofactor. Mg(2+) serves as cofactor.

The catalysed reaction is 6-carboxy-5,6,7,8-tetrahydropterin + H(+) = 7-carboxy-7-deazaguanine + NH4(+). It participates in purine metabolism; 7-cyano-7-deazaguanine biosynthesis. Functionally, catalyzes the complex heterocyclic radical-mediated conversion of 6-carboxy-5,6,7,8-tetrahydropterin (CPH4) to 7-carboxy-7-deazaguanine (CDG), a step common to the biosynthetic pathways of all 7-deazapurine-containing compounds. This chain is 7-carboxy-7-deazaguanine synthase, found in Synechocystis sp. (strain ATCC 27184 / PCC 6803 / Kazusa).